We begin with the raw amino-acid sequence, 308 residues long: MGNVVYKLTSKEIQSLMAQTTFETTKLPQGMKARTRYQNTVINIYSSGKVMFQGKNADQLASQLLPDKQSTTGKHTSSNTTSIQYNRFHCIGSDEAGSGDYFGPLTVCAAYVSQSHIKILKELGVDDSKKLNDTKIVDLAEQLITFIPHSLLTLDNVKYNERQSIGWSQVKMKAVLHNEAIKNVLQKIEQDQLDYIVIDQFAKREVYQHYALSALPFPDKTKFETKGESKSLAIAVASIISRYAFVKHMDHISKKLHMEIPKGASNKVDLIAAKVIQKYDIQQLDTISKKHFKNRDKAIHLMNQKYNK.

One can recognise an RNase H type-2 domain in the interval 88-304; the sequence is FHCIGSDEAG…RDKAIHLMNQ (217 aa). A divalent metal cation-binding residues include aspartate 94, glutamate 95, and aspartate 199.

It belongs to the RNase HII family. RnhC subfamily. The cofactor is Mn(2+). Mg(2+) serves as cofactor.

The protein resides in the cytoplasm. The enzyme catalyses Endonucleolytic cleavage to 5'-phosphomonoester.. Functionally, endonuclease that specifically degrades the RNA of RNA-DNA hybrids. The sequence is that of Ribonuclease HIII from Staphylococcus epidermidis (strain ATCC 12228 / FDA PCI 1200).